Consider the following 152-residue polypeptide: Xanthine-guanine phosphoribosyltransferase (152 aa).

5-phospho-alpha-D-ribose 1-diphosphate contacts are provided by residues 37–38 (RG), Arg69, and 88–96 (DDLVDTGGT). Residue Arg69 coordinates GMP. Asp89 is a Mg(2+) binding site. 2 residues coordinate guanine: Asp92 and Ile135. Xanthine is bound by residues Asp92 and Ile135. Residues 92–96 (DTGGT) and 134–135 (WI) contribute to the GMP site.

This sequence belongs to the purine/pyrimidine phosphoribosyltransferase family. XGPT subfamily. In terms of assembly, homotetramer. Mg(2+) is required as a cofactor.

Its subcellular location is the cell inner membrane. The enzyme catalyses GMP + diphosphate = guanine + 5-phospho-alpha-D-ribose 1-diphosphate. The catalysed reaction is XMP + diphosphate = xanthine + 5-phospho-alpha-D-ribose 1-diphosphate. It carries out the reaction IMP + diphosphate = hypoxanthine + 5-phospho-alpha-D-ribose 1-diphosphate. It functions in the pathway purine metabolism; GMP biosynthesis via salvage pathway; GMP from guanine: step 1/1. The protein operates within purine metabolism; XMP biosynthesis via salvage pathway; XMP from xanthine: step 1/1. Purine salvage pathway enzyme that catalyzes the transfer of the ribosyl-5-phosphate group from 5-phospho-alpha-D-ribose 1-diphosphate (PRPP) to the N9 position of the 6-oxopurines guanine and xanthine to form the corresponding ribonucleotides GMP (guanosine 5'-monophosphate) and XMP (xanthosine 5'-monophosphate), with the release of PPi. To a lesser extent, also acts on hypoxanthine. The protein is Xanthine-guanine phosphoribosyltransferase of Pectobacterium atrosepticum (strain SCRI 1043 / ATCC BAA-672) (Erwinia carotovora subsp. atroseptica).